Reading from the N-terminus, the 468-residue chain is Cysteine--tRNA ligase (468 aa).

A Zn(2+)-binding site is contributed by Cys33. A 'HIGH' region motif is present at residues 35–45; the sequence is ATVQGLPHIGH. 3 residues coordinate Zn(2+): Cys211, His236, and Glu240. A 'KMSKS' region motif is present at residues 267–271; sequence KMSKS. Residue Lys270 participates in ATP binding.

This sequence belongs to the class-I aminoacyl-tRNA synthetase family. Monomer. Zn(2+) is required as a cofactor.

It is found in the cytoplasm. The enzyme catalyses tRNA(Cys) + L-cysteine + ATP = L-cysteinyl-tRNA(Cys) + AMP + diphosphate. This Mycobacterium marinum (strain ATCC BAA-535 / M) protein is Cysteine--tRNA ligase.